A 290-amino-acid chain; its full sequence is MLKNDLSGARVVAVHAHPDDEAITTGGVLADLAARGADVTVITCTLGEQGEVIGETFAQLVNGDADQLGGFRIHELYASLEILGVRGIHLGGAGCWRDSGMVGDPANEHPRAFIHSGDRAVEQLKELLAELKPHLLITYGPDGGYGHPDHIRAHEITHAAAGEQRILWAVSDREELEDGLKAITGLPEGWGRGELSAVDSVDLSVELNDEVYATKVESMRAHATQLWIADGSVSRTNPVAAHAVTQQDNVKVWALSNLIAQPIMRHEHYQLGAGTPLPEGATGVLDGLEF.

3 residues coordinate Zn(2+): H17, D20, and H150.

This sequence belongs to the MshB deacetylase family. Zn(2+) serves as cofactor.

It catalyses the reaction 1D-myo-inositol 2-acetamido-2-deoxy-alpha-D-glucopyranoside + H2O = 1D-myo-inositol 2-amino-2-deoxy-alpha-D-glucopyranoside + acetate. In terms of biological role, catalyzes the deacetylation of 1D-myo-inositol 2-acetamido-2-deoxy-alpha-D-glucopyranoside (GlcNAc-Ins) in the mycothiol biosynthesis pathway. This chain is 1D-myo-inositol 2-acetamido-2-deoxy-alpha-D-glucopyranoside deacetylase, found in Corynebacterium glutamicum (strain R).